Reading from the N-terminus, the 122-residue chain is uncharacterized protein (122 aa).

Residues Val10 to Thr120 enclose the HIT domain. Residues His104–His108 carry the Histidine triad motif motif.

This is an uncharacterized protein from Azospirillum brasilense.